A 78-amino-acid polypeptide reads, in one-letter code: D-alanyl carrier protein (78 aa).

Positions 1–78 (MDVENTVVEI…KIIAKAKELQ (78 aa)) constitute a Carrier domain. An O-(pantetheine 4'-phosphoryl)serine modification is found at Ser36.

The protein belongs to the DltC family. Post-translationally, 4'-phosphopantetheine is transferred from CoA to a specific serine of apo-DCP.

The protein localises to the cytoplasm. It functions in the pathway cell wall biogenesis; lipoteichoic acid biosynthesis. In terms of biological role, carrier protein involved in the D-alanylation of lipoteichoic acid (LTA). The loading of thioester-linked D-alanine onto DltC is catalyzed by D-alanine--D-alanyl carrier protein ligase DltA. The DltC-carried D-alanyl group is further transferred to cell membrane phosphatidylglycerol (PG) by forming an ester bond, probably catalyzed by DltD. D-alanylation of LTA plays an important role in modulating the properties of the cell wall in Gram-positive bacteria, influencing the net charge of the cell wall. The polypeptide is D-alanyl carrier protein (Latilactobacillus sakei subsp. sakei (strain 23K) (Lactobacillus sakei subsp. sakei)).